Reading from the N-terminus, the 314-residue chain is Melanoma-associated antigen 12 (314 aa).

Residues 1-14 are compositionally biased toward basic and acidic residues; it reads MPLEQRSQHCKPEE. Residues 1–72 form a disordered region; it reads MPLEQRSQHC…HSPQGASTLP (72 aa). Low complexity predominate over residues 17–44; sequence EAQGEALGLVGAQAPATEEQETASSSST. One can recognise an MAGE domain in the interval 109–308; it reads LSRKMAELVH…ISYPPLHEWA (200 aa).

In terms of tissue distribution, expressed in many tumors of several types, such as melanoma, head and neck squamous cell carcinoma, lung carcinoma and breast carcinoma, but not in normal tissues except for testes.

In terms of biological role, not known, though may play a role tumor transformation or progression. In vitro promotes cell viability in melanoma cell lines. In Homo sapiens (Human), this protein is Melanoma-associated antigen 12 (MAGEA12).